A 160-amino-acid polypeptide reads, in one-letter code: Gene 34 protein (160 aa).

Positions 1 to 11 are enriched in polar residues; sequence MDSPRGISTAT. The disordered stretch occupies residues 1–26; the sequence is MDSPRGISTATGDAHAEAAVSPAAEI.

This chain is Gene 34 protein, found in Equus caballus (Horse).